A 287-amino-acid chain; its full sequence is Probable ketose 3-epimerase (287 aa).

The active-site Proton donor/acceptor is Glu152. Positions 152 and 185 each coordinate Mn(2+). A substrate-binding site is contributed by His188. His211 lines the Mn(2+) pocket. Substrate is bound at residue Arg217. Glu246 (proton donor/acceptor) is an active-site residue. Glu246 contributes to the Mn(2+) binding site.

It belongs to the hyi family. Requires Mn(2+) as cofactor.

In terms of biological role, probably catalyzes the epimerization of ketopentoses and/or ketohexoses at the C3 position. In Synechocystis sp. (strain ATCC 27184 / PCC 6803 / Kazusa), this protein is Probable ketose 3-epimerase.